We begin with the raw amino-acid sequence, 248 residues long: Meiotically up-regulated gene 65 protein (248 aa).

In terms of biological role, has a role in meiosis. The polypeptide is Meiotically up-regulated gene 65 protein (mug65) (Schizosaccharomyces pombe (strain 972 / ATCC 24843) (Fission yeast)).